Consider the following 708-residue polypeptide: GID complex associated protein 12 (708 aa).

The segment covering S381–R396 has biased composition (low complexity). Positions S381 to R403 are disordered.

In terms of assembly, interacts with core components of the GID/CTLH ubiquitin ligase complex. GID12 binds both the substrate receptor GID4 and the tip of GID5 in the scaffolding module, sealing GID4 onto the scaffold.

Its function is as follows. Regulator of the GID E3 ligase complex. Modulates both assembly of the substrate receptor GID4 into the GID E3 ligase complex and its activity toward its substrates. GID12-binding remodels the N-degron binding pocket in the GID(SR4) complex, and could limit substrate accessibility of a bulky substrate to a ubiquitynation active site, thereby stabilizing gluconeogenic enzyme substrates. Involved in actin patch formation. This chain is GID complex associated protein 12, found in Saccharomyces cerevisiae (strain ATCC 204508 / S288c) (Baker's yeast).